The following is an 800-amino-acid chain: Phenylalanine--tRNA ligase beta subunit (800 aa).

The region spanning 39-154 (TKDIKNLVVG…EAQVPGTDAL (116 aa)) is the tRNA-binding domain. Residues 408 to 483 (AFITPIDITA…RIYGYDDIPS (76 aa)) form the B5 domain. Residues aspartate 461, aspartate 467, glutamate 470, and glutamate 471 each coordinate Mg(2+). The region spanning 708 to 800 (PRFPGMSRDI…ALIEQGAVIR (93 aa)) is the FDX-ACB domain.

Belongs to the phenylalanyl-tRNA synthetase beta subunit family. Type 1 subfamily. In terms of assembly, tetramer of two alpha and two beta subunits. Mg(2+) serves as cofactor.

The protein resides in the cytoplasm. It carries out the reaction tRNA(Phe) + L-phenylalanine + ATP = L-phenylalanyl-tRNA(Phe) + AMP + diphosphate + H(+). The sequence is that of Phenylalanine--tRNA ligase beta subunit from Staphylococcus aureus (strain COL).